The chain runs to 165 residues: Peptidyl-prolyl cis-trans isomerase A (165 aa).

Met-1 is modified (N-acetylmethionine). Val-2 bears the N-acetylvaline; in Peptidyl-prolyl cis-trans isomerase A, N-terminally processed mark. The region spanning 7–163 (FFDIAVDGEP…KKITIADCGQ (157 aa)) is the PPIase cyclophilin-type domain. Lys-28 is modified (N6-acetyllysine; alternate). Lys-28 participates in a covalent cross-link: Glycyl lysine isopeptide (Lys-Gly) (interchain with G-Cter in SUMO2); alternate. Lys-28 participates in a covalent cross-link: Glycyl lysine isopeptide (Lys-Gly) (interchain with G-Cter in ubiquitin); alternate. Residues Lys-44 and Lys-76 each carry the N6-acetyllysine modification. At Ser-77 the chain carries Phosphoserine. Position 82 is an N6-acetyllysine; alternate (Lys-82). A Glycyl lysine isopeptide (Lys-Gly) (interchain with G-Cter in SUMO2); alternate cross-link involves residue Lys-82. Thr-93 bears the Phosphothreonine mark. Asn-108 is a glycosylation site (N-linked (GlcNAc...) asparagine). N6-acetyllysine is present on residues Lys-125, Lys-131, and Lys-133.

Belongs to the cyclophilin-type PPIase family. PPIase A subfamily. In terms of assembly, interacts with protein phosphatase PPP3CA/calcineurin A. Interacts with isoform 2 of BSG/CD147. Interacts with FOXO1; the interaction promotes FOXO1 dephosphorylation, nuclear accumulation and transcriptional activity. Interacts with integrin ITGA2B:ITGB3; the interaction is ROS and peptidyl-prolyl cis-trans isomerase (PPIase) activity-dependent and is increased in the presence of thrombin. Interacts with MAP3K5. Interacts with TARDBP; the interaction is dependent on the RNA-binding activity of TARDBP and the PPIase activity of PPIA/CYPA and the acetylation of PPIA/CYPA at Lys-125 favors the interaction. Interacts with HNRNPA1, HNRNPA2B1, HNRNPC, RBMX, HNRNPK and HNRNPM. Acetylation at Lys-125 markedly inhibits catalysis of cis to trans isomerization. PPIA acetylation also antagonizes the immunosuppressive effects of cyclosporine by inhibiting the sequential steps of cyclosporine binding and calcineurin inhibition. Acetylation at Lys-125 favors the interaction with TARDBP.

It localises to the cytoplasm. The protein resides in the secreted. Its subcellular location is the nucleus. The catalysed reaction is [protein]-peptidylproline (omega=180) = [protein]-peptidylproline (omega=0). Its activity is regulated as follows. Binds cyclosporin A (CsA). CsA mediates some of its effects via an inhibitory action on PPIase. Catalyzes the cis-trans isomerization of proline imidic peptide bonds in oligopeptides. Exerts a strong chemotactic effect on leukocytes partly through activation of one of its membrane receptors BSG/CD147, initiating a signaling cascade that culminates in MAPK/ERK activation. Activates endothelial cells (ECs) in a proinflammatory manner by stimulating activation of NF-kappa-B and ERK, JNK and p38 MAP-kinases and by inducing expression of adhesion molecules including SELE and VCAM1. Induces apoptosis in ECs by promoting the FOXO1-dependent expression of CCL2 and BCL2L11 which are involved in EC chemotaxis and apoptosis. In response to oxidative stress, initiates proapoptotic and antiapoptotic signaling in ECs via activation of NF-kappa-B and AKT1 and up-regulation of antiapoptotic protein BCL2. Negatively regulates MAP3K5/ASK1 kinase activity, autophosphorylation and oxidative stress-induced apoptosis mediated by MAP3K5/ASK1. Necessary for the assembly of TARDBP in heterogeneous nuclear ribonucleoprotein (hnRNP) complexes and regulates TARDBP binding to RNA UG repeats and TARDBP-dependent expression of HDAC6, ATG7 and VCP which are involved in clearance of protein aggregates. Plays an important role in platelet activation and aggregation. Regulates calcium mobilization and integrin ITGA2B:ITGB3 bidirectional signaling via increased ROS production as well as by facilitating the interaction between integrin and the cell cytoskeleton. Binds heparan sulfate glycosaminoglycans. The chain is Peptidyl-prolyl cis-trans isomerase A (PPIA) from Symphalangus syndactylus (Siamang).